The sequence spans 390 residues: Histamine H4 receptor (390 aa).

Over Met1–Ala19 the chain is Extracellular. N-linked (GlcNAc...) asparagine glycosylation is found at Asn5 and Asn9. A helical transmembrane segment spans residues Phe20 to Phe40. The Cytoplasmic portion of the chain corresponds to Val41–Tyr52. The helical transmembrane segment at Phe53–Ile73 threads the bilayer. The Extracellular segment spans residues Pro74 to Cys87. Cys87 and Cys164 are joined by a disulfide. Residues Val88–Ile108 form a helical membrane-spanning segment. At Ser109–Lys131 the chain is on the cytoplasmic side. A helical membrane pass occupies residues Ile132 to Leu152. The Extracellular segment spans residues Val153–Trp172. The helical transmembrane segment at Tyr173–Phe193 threads the bilayer. The Cytoplasmic portion of the chain corresponds to Asn194–Ser304. Residues Leu305 to Val325 form a helical membrane-spanning segment. Residues Leu326–Arg341 lie on the Extracellular side of the membrane. The chain crosses the membrane as a helical span at residues Ile342–His362. At Lys363–Ser390 the chain is on the cytoplasmic side.

The protein belongs to the G-protein coupled receptor 1 family. As to quaternary structure, interacts with TSPAN4. In terms of tissue distribution, expressed primarily in the bone marrow and eosinophils. Shows preferential distribution in cells of immunological relevance such as T-cells, dendritic cells, monocytes, mast cells, neutrophils. Also expressed in a wide variety of peripheral tissues, including the heart, kidney, liver, lung, pancreas, skeletal muscle, prostate, small intestine, spleen, testis, colon, fetal liver and lymph node.

The protein localises to the cell membrane. In terms of biological role, the H4 subclass of histamine receptors could mediate the histamine signals in peripheral tissues. Displays a significant level of constitutive activity (spontaneous activity in the absence of agonist). The polypeptide is Histamine H4 receptor (HRH4) (Homo sapiens (Human)).